The chain runs to 210 residues: Troponin I, cardiac muscle (210 aa).

The disordered stretch occupies residues M1 to A43. The residue at position 2 (A2) is an N-acetylalanine. Phosphoserine is present on residues S5 and S6. A phosphoserine; by PKA and PKD/PRKD1 mark is found at S23 and S24. Y26 carries the post-translational modification Phosphotyrosine. Position 31 is a phosphothreonine; by STK4/MST1 (T31). An involved in binding TNC region spans residues E32 to R79. A phosphoserine; by PKC/PRKCE mark is found at S42 and S44. A Phosphothreonine; by STK4/MST1 modification is found at T51. Phosphoserine is present on S77. At T78 the chain carries Phosphothreonine. 2 positions are modified to phosphothreonine; by STK4/MST1: T129 and T143. The segment at T129 to I149 is involved in binding TNC and actin. Residue S150 is modified to Phosphoserine; by PAK3. The residue at position 166 (S166) is a Phosphoserine. T181 carries the post-translational modification Phosphothreonine. S199 carries the post-translational modification Phosphoserine.

This sequence belongs to the troponin I family. In terms of assembly, binds to actin and tropomyosin. Interacts with TRIM63. Interacts with STK4/MST1. Post-translationally, phosphorylated at Ser-42 and Ser-44 by PRKCE; phosphorylation increases myocardium contractile dysfunction. Phosphorylated at Ser-23 and Ser-24 by PRKD1; phosphorylation reduces myofilament calcium sensitivity. Phosphorylated preferentially at Thr-31. Phosphorylation by STK4/MST1 alters its binding affinity to TNNC1 (cardiac Tn-C) and TNNT2 (cardiac Tn-T).

Its function is as follows. Troponin I is the inhibitory subunit of troponin, the thin filament regulatory complex which confers calcium-sensitivity to striated muscle actomyosin ATPase activity. This chain is Troponin I, cardiac muscle (TNNI3), found in Homo sapiens (Human).